Here is a 938-residue protein sequence, read N- to C-terminus: Ubiquitin carboxyl-terminal hydrolase Usp2 (938 aa).

6 disordered regions span residues 1–53 (MMLD…KVGA), 91–117 (KVKT…NTSR), 130–254 (FNGN…ISTT), 273–297 (EQNQ…HRYP), 360–410 (LSGQ…NLQQ), and 500–610 (KDAT…EKSE). Residues 22-36 (STTKTSSVVATSASS) are compositionally biased toward low complexity. 4 stretches are compositionally biased toward low complexity: residues 137–158 (TTTN…NTSN), 167–177 (STTATATSTST), 198–227 (MNGH…QRQQ), and 275–289 (NQVQ…PSSS). The span at 392–410 (ASRSNHGSQAGGSSSNLQQ) shows a compositional bias: polar residues. Composition is skewed to low complexity over residues 502-555 (ATTA…TARS) and 574-583 (TSRSSIGTSS). Basic and acidic residues predominate over residues 592-610 (HNSDDGYKTASSSRDEKSE). A USP domain is found at 613–938 (CGLRNIGNTC…SAYILFYERT (326 aa)). Catalysis depends on Cys-622, which acts as the Nucleophile. 4 residues coordinate Zn(2+): Cys-765, Cys-768, Cys-814, and Cys-817. Catalysis depends on His-895, which acts as the Proton acceptor.

This sequence belongs to the peptidase C19 family. In terms of assembly, interacts (via N-terminus) with imd (via N-terminus). Interacts with Rpt6.

It carries out the reaction Thiol-dependent hydrolysis of ester, thioester, amide, peptide and isopeptide bonds formed by the C-terminal Gly of ubiquitin (a 76-residue protein attached to proteins as an intracellular targeting signal).. Functionally, hydrolase that deubiquitinates polyubiquitinated target proteins. Required for preventing the activation of the Toll signaling cascades under unchallenged conditions. Essential for bodily calcium homeostasis. In terms of biological role, required for preventing the activation of the immune deficiency (Imd) signaling cascade under unchallenged conditions. Regulates the Imd pathway by specifically removing 'Lys-48'-linked ubiquitin from imd. Also promotes imd degradation probably by binding to imd and enhancing its association with the proteasome. In Drosophila melanogaster (Fruit fly), this protein is Ubiquitin carboxyl-terminal hydrolase Usp2.